Consider the following 615-residue polypeptide: Coagulation factor XII (615 aa).

An N-terminal signal peptide occupies residues 1-19 (MRALLLLGFLLVSLESTLS). Positions 42-90 (VTGEPCHFPFQYHRQLYHKCTHKGRPGPQPWCATTPNFDQDQRWGYCLE) constitute a Fibronectin type-II domain. Cystine bridges form between C47–C73, C61–C88, C98–C110, C104–C119, C121–C130, C135–C163, C161–C170, C178–C189, C183–C198, C200–C209, C217–C295, C238–C277, and C266–C290. The EGF-like 1 domain occupies 94–131 (VKDHCSKHSPCQKGGTCVNMPSGPHCLCPQHLTGNHCQ). A glycan (O-linked (Fuc) threonine) is linked at T109. Residues 133 to 173 (EKCFEPQLLRFFHKNEIWYRTEQAAVARCQCKGPDAHCQRL) enclose the Fibronectin type-I domain. In terms of domain architecture, EGF-like 2 spans 174 to 210 (ASQACRTNPCLHGGRCLEVEGHRLCHCPVGYTGAFCD). The 79-residue stretch at 217–295 (CYDGRGLSYR…SWEYCDLAQC (79 aa)) folds into the Kringle domain. N249 carries an N-linked (GlcNAc...) asparagine glycan. The segment at 298–359 (PTQAAPPTPV…SLTRNGPLSC (62 aa)) is disordered. Residues T299 and T305 are each glycosylated (O-linked (GalNAc...) threonine). Residue S308 is glycosylated (O-linked (GalNAc...) serine). Residues 317–326 (PAQPAPPKPQ) show a composition bias toward pro residues. Over residues 327-338 (PTTRTPPQSQTP) the composition is skewed to low complexity. O-linked (GalNAc...) threonine glycosylation is found at T328, T329, and T337. 7 disulfide bridges follow: C359–C486, C397–C413, C405–C475, C436–C439, C500–C569, C532–C548, and C559–C590. One can recognise a Peptidase S1 domain in the interval 373 to 614 (VVGGLVALRG…YLAWIREHTV (242 aa)). The active-site Charge relay system is H412. An N-linked (GlcNAc...) asparagine glycan is attached at N433. The active-site Charge relay system is D461. S563 acts as the Charge relay system in catalysis.

It belongs to the peptidase S1 family. Interacts with HRG; the interaction, which is enhanced in the presence of zinc ions and inhibited by heparin-binding, inhibits factor XII autoactivation and contact-initiated coagulation. Interacts (inactive and activated) with D7L2, an anticoagulant protein from Anopheles gambiae. Interacts (activated) with iripin-8, a serine protease inhibitor from Ixodes ricinus saliva. Interacts (inactive and activated) (via amino acids 1-77) with triafestin-1 and triafestin-2, anticoagulant proteins from Triatoma infestans. Interacts (inactive and activated) (via amino acids 1-77) with short form salivary protein D7R1, an anticoagulant protein from Anopheles stephensi. Interacts (inactive and activated) (via fibronectin type II domain) with haemaphysalin, an anticoagulant protein from Haemaphysalis longicornis. In terms of processing, factor XII is activated by kallikrein in alpha-factor XIIa, which is further converted by trypsin into beta-factor XIIa. Alpha-factor XIIa is composed of an NH2-terminal heavy chain, called coagulation factor XIIa heavy chain, and a COOH-terminal light chain, called coagulation factor XIIa light chain, connected by a disulfide bond. Beta-factor XIIa is composed of 2 chains linked by a disulfide bond, an N-terminal nonapeptide, called beta-factor XIIa part 1, and coagulation factor XIIa light chain, also known in this context as beta-factor XIIa part 2. Post-translationally, O- and N-glycosylated. The O-linked polysaccharides were not identified, but are probably the mucin type linked to GalNAc.

It is found in the secreted. The catalysed reaction is Selective cleavage of Arg-|-Ile bonds in factor VII to form factor VIIa and factor XI to form factor XIa.. Its activity is regulated as follows. Activity is promoted in the presence of negatively charged surfaces. Its function is as follows. Factor XII is a serum glycoprotein that participates in the initiation of blood coagulation, fibrinolysis, and the generation of bradykinin and angiotensin. Prekallikrein is cleaved by factor XII to form kallikrein, which then cleaves factor XII first to alpha-factor XIIa and then trypsin cleaves it to beta-factor XIIa. Alpha-factor XIIa activates factor XI to factor XIa. This chain is Coagulation factor XII (F12), found in Homo sapiens (Human).